A 496-amino-acid polypeptide reads, in one-letter code: Cytosol aminopeptidase (496 aa).

Mn(2+) contacts are provided by K258 and D263. K270 is an active-site residue. Mn(2+) contacts are provided by D281, D340, and E342. R344 is an active-site residue.

Belongs to the peptidase M17 family. Mn(2+) serves as cofactor.

Its subcellular location is the cytoplasm. The enzyme catalyses Release of an N-terminal amino acid, Xaa-|-Yaa-, in which Xaa is preferably Leu, but may be other amino acids including Pro although not Arg or Lys, and Yaa may be Pro. Amino acid amides and methyl esters are also readily hydrolyzed, but rates on arylamides are exceedingly low.. It catalyses the reaction Release of an N-terminal amino acid, preferentially leucine, but not glutamic or aspartic acids.. Its function is as follows. Presumably involved in the processing and regular turnover of intracellular proteins. Catalyzes the removal of unsubstituted N-terminal amino acids from various peptides. This is Cytosol aminopeptidase (pepA) from Helicobacter pylori (strain ATCC 700392 / 26695) (Campylobacter pylori).